The primary structure comprises 249 residues: 2,3-bisphosphoglycerate-dependent phosphoglycerate mutase (249 aa).

Substrate-binding positions include 9–16 (RHGQSQWN), 22–23 (TG), Arg61, 88–91 (ERHY), Lys99, 115–116 (RR), and 184–185 (GN). His10 functions as the Tele-phosphohistidine intermediate in the catalytic mechanism. The active-site Proton donor/acceptor is Glu88.

Belongs to the phosphoglycerate mutase family. BPG-dependent PGAM subfamily. As to quaternary structure, homodimer.

It carries out the reaction (2R)-2-phosphoglycerate = (2R)-3-phosphoglycerate. It functions in the pathway carbohydrate degradation; glycolysis; pyruvate from D-glyceraldehyde 3-phosphate: step 3/5. Catalyzes the interconversion of 2-phosphoglycerate and 3-phosphoglycerate. This Xylella fastidiosa (strain M23) protein is 2,3-bisphosphoglycerate-dependent phosphoglycerate mutase.